Here is a 223-residue protein sequence, read N- to C-terminus: MRIHDLDPENRPRERFLSSGPSALSSAELLALVLRSGTRHLNIVDTCQRIIAENGLERLASMTLGELQKTPGIGQAKAMQIVAIFELNNRLHHTRNTNRRVQGAKDVFEYMSGRIPDETQEHLFVLHLNTKNQVTKCVRVTVGTLNASLIHPREVFKSAIRESAHAIILVHNHPSGDTEPSNADRQVTTLLKQASAVIQIDLLDHVIIGKTSWFSFRESNLLG.

Residues 100–222 (RVQGAKDVFE…WFSFRESNLL (123 aa)) enclose the MPN domain. 3 residues coordinate Zn(2+): His171, His173, and Asp184. The JAMM motif signature appears at 171–184 (HNHPSGDTEPSNAD).

This sequence belongs to the UPF0758 family.

The polypeptide is UPF0758 protein Plut_0598 (Chlorobium luteolum (strain DSM 273 / BCRC 81028 / 2530) (Pelodictyon luteolum)).